The chain runs to 89 residues: Protein XhlA (89 aa).

Residues 63-83 (ITGAIITAVSTGIIGGAIAIM) traverse the membrane as a helical segment.

This sequence to B.licheniformis xpaF1 and xpaL1.

It is found in the cell membrane. Functionally, associated with cell lysis upon induction of PbsX. This is Protein XhlA (xhlA) from Bacillus subtilis (strain 168).